A 340-amino-acid polypeptide reads, in one-letter code: uncharacterized protein (340 aa).

A compositionally biased stretch (basic and acidic residues) spans 193–207; the sequence is KELPKEKKKSDGDKT. A disordered region spans residues 193-340; it reads KELPKEKKKS…FIPLQPKKKI (148 aa). Residues 217-228 are compositionally biased toward low complexity; sequence FFGFWGHSGSKS. Residues 235-244 are compositionally biased toward basic and acidic residues; the sequence is EKPIEAKNEI. Polar residues-rich tracts occupy residues 263 to 279 and 307 to 328; these read SDKNTIQSKQESMSDQQ and PAQSSYHPSSEPSIASTPSLTL.

This is an uncharacterized protein from Saccharomyces cerevisiae (strain ATCC 204508 / S288c) (Baker's yeast).